Reading from the N-terminus, the 181-residue chain is Deoxyuridine 5'-triphosphate nucleotidohydrolase (181 aa).

Residues 96–98, asparagine 109, 113–115, and lysine 123 each bind substrate; these read RSG and TVD.

The protein belongs to the dUTPase family. Mg(2+) serves as cofactor.

The enzyme catalyses dUTP + H2O = dUMP + diphosphate + H(+). It functions in the pathway pyrimidine metabolism; dUMP biosynthesis; dUMP from dCTP (dUTP route): step 2/2. Its function is as follows. This enzyme is involved in nucleotide metabolism: it produces dUMP, the immediate precursor of thymidine nucleotides and it decreases the intracellular concentration of dUTP so that uracil cannot be incorporated into DNA. The chain is Deoxyuridine 5'-triphosphate nucleotidohydrolase from Corynebacterium efficiens (strain DSM 44549 / YS-314 / AJ 12310 / JCM 11189 / NBRC 100395).